Reading from the N-terminus, the 412-residue chain is uncharacterized protein (412 aa).

Disordered regions lie at residues 150–171, 177–196, and 302–412; these read NTPG…QLGD, QITS…QQQQ, and QAQQ…PLNP. The span at 156 to 168 shows a compositional bias: low complexity; the sequence is QAQQQQQQQQQQQ. Polar residues-rich tracts occupy residues 177–187 and 310–321; these read QITSSNNSGNS and MGSSPTHSSPTI. The span at 335 to 345 shows a compositional bias: low complexity; it reads GGIINTNTNLN. Over residues 350-363 the composition is skewed to polar residues; that stretch reads VSPNQPMPNSSPIL. 2 stretches are compositionally biased toward low complexity: residues 364–373 and 381–394; these read PTNASSVVPP and TSNN…TTSP.

This is an uncharacterized protein from Dictyostelium discoideum (Social amoeba).